We begin with the raw amino-acid sequence, 508 residues long: MNGRTRSPARAVMVLGTTSGAGKSWLATALCRWYARQGLKVAPFKAQNMSNNARVVPGSGGRLGEIGSAQYFQALAARVLPDVRMNPVLLKPENDTGSQVVVLGEVRADLAAVPWRERSERLWPFAQDALLALMAENDVVVIEGAGSPAEINLHASDYVNMRTAQAARAACLLVSDIDRGGAFAHLYGTHQLLPAAERALLRGYVLNRFRGDARLLEPGPQQLLALTGVPTLAVLPMWRGHGLPEEDGLHDEGPGWQRGAGNAAASLRIAVVAYPRISNLDEFQPLRQLRGVQLRWARSAEELAGADWIVLPGSKHTSGDLAWLREQRIDAALARHAAARRPVLGLCGGLQMLGEALVDPHGVEGENGEGNAPGLGLLPLVTAFEPDKLLRRTDACFDGVGDEWSMLRGVQFGGYEIRHGRSVQHPALPAAAVALRNAEGEAIGWQQGSVLGLYAHGLFESTEVLRALFGARVRGLESVFDGLADFIDRHFEPGALMRLLADAEPGKD.

In terms of domain architecture, GATase cobBQ-type spans 266 to 464; it reads SLRIAVVAYP…AHGLFESTEV (199 aa). Residue Cys347 is the Nucleophile of the active site. His456 is a catalytic residue.

It belongs to the CobB/CobQ family. CobQ subfamily.

It participates in cofactor biosynthesis; adenosylcobalamin biosynthesis. In terms of biological role, catalyzes amidations at positions B, D, E, and G on adenosylcobyrinic A,C-diamide. NH(2) groups are provided by glutamine, and one molecule of ATP is hydrogenolyzed for each amidation. The sequence is that of Cobyric acid synthase from Methylibium petroleiphilum (strain ATCC BAA-1232 / LMG 22953 / PM1).